The sequence spans 200 residues: Holliday junction branch migration complex subunit RuvA (200 aa).

The domain I stretch occupies residues Met1–Ala64. Residues Thr65–Ala143 form a domain II region. Positions Ser144–Glu154 are flexible linker. Residues Glu154 to Arg200 form a domain III region.

This sequence belongs to the RuvA family. Homotetramer. Forms an RuvA(8)-RuvB(12)-Holliday junction (HJ) complex. HJ DNA is sandwiched between 2 RuvA tetramers; dsDNA enters through RuvA and exits via RuvB. An RuvB hexamer assembles on each DNA strand where it exits the tetramer. Each RuvB hexamer is contacted by two RuvA subunits (via domain III) on 2 adjacent RuvB subunits; this complex drives branch migration. In the full resolvosome a probable DNA-RuvA(4)-RuvB(12)-RuvC(2) complex forms which resolves the HJ.

The protein localises to the cytoplasm. The RuvA-RuvB-RuvC complex processes Holliday junction (HJ) DNA during genetic recombination and DNA repair, while the RuvA-RuvB complex plays an important role in the rescue of blocked DNA replication forks via replication fork reversal (RFR). RuvA specifically binds to HJ cruciform DNA, conferring on it an open structure. The RuvB hexamer acts as an ATP-dependent pump, pulling dsDNA into and through the RuvAB complex. HJ branch migration allows RuvC to scan DNA until it finds its consensus sequence, where it cleaves and resolves the cruciform DNA. The polypeptide is Holliday junction branch migration complex subunit RuvA (Chlorobium phaeovibrioides (strain DSM 265 / 1930) (Prosthecochloris vibrioformis (strain DSM 265))).